The chain runs to 732 residues: Polyribonucleotide nucleotidyltransferase (732 aa).

The Mg(2+) site is built by Asp-503 and Asp-509. The region spanning 570-629 (PRLTSIQIPVDAIGLIIGKGGETIRSITEETGAEINIEDDGTVTIACSSPEGTNAAVETI) is the KH domain. Positions 639–713 (GNTYLGKVRD…GKNRFALSIK (75 aa)) constitute an S1 motif domain. Residues 710–732 (LSIKAVESEPEKSDENKAGTEGN) are disordered. A compositionally biased stretch (basic and acidic residues) spans 715 to 732 (VESEPEKSDENKAGTEGN).

This sequence belongs to the polyribonucleotide nucleotidyltransferase family. Mg(2+) serves as cofactor.

Its subcellular location is the cytoplasm. It catalyses the reaction RNA(n+1) + phosphate = RNA(n) + a ribonucleoside 5'-diphosphate. Its function is as follows. Involved in mRNA degradation. Catalyzes the phosphorolysis of single-stranded polyribonucleotides processively in the 3'- to 5'-direction. This Chlorobium phaeobacteroides (strain DSM 266 / SMG 266 / 2430) protein is Polyribonucleotide nucleotidyltransferase.